A 720-amino-acid polypeptide reads, in one-letter code: DNA replication licensing factor mcm7 (720 aa).

The C4-type zinc-finger motif lies at 183–210 (CDQCGAETYQPIQSPTFMPLIMCPSREC). Residues 331 to 537 (FYEKLAASIA…NDLRLAQHIT (207 aa)) form the MCM domain. Tyrosine 344, glycine 383, alanine 385, lysine 386, serine 387, asparagine 488, arginine 513, and arginine 603 together coordinate ATP. Residues 512-515 (SRFD) carry the Arginine finger motif.

Belongs to the MCM family. As to quaternary structure, component of the mcm2-7 complex (RLF-M). The complex forms a toroidal hexameric ring with the proposed subunit order mcm2-mcm6-mcm4-mcm7-mcm3-mcm5. The heterodimer of mmcm3/mcm5 interacts with mcm4, mmcm6, mcm7 and weakly with mcm2. The N-terminus is required for interaction with mmcm3, though this interaction may not be direct, and remains in a complex with mmcm3 throughout the cell cycle. Begins to associate with zmcm6 at the neurula stage. Component of the replisome complex. Component of the CMG helicase complex, composed of the mcm2-7 complex, the GINS complex and cdc45. Ubiquitinated by traip when forks converge following formation of DNA interstrand cross-links. Short ubiquitin chains on mcm7 promote recruitment of DNA glycosylase neil3. If the interstrand cross-link cannot be cleaved by neil3, the ubiquitin chains continue to grow on mcm7, promoting the unloading of the CMG helicase complex by the vcp/p97 ATPase.

The protein resides in the nucleus. Its subcellular location is the chromosome. The catalysed reaction is ATP + H2O = ADP + phosphate + H(+). Its function is as follows. Acts as a component of the mcm2-7 complex (mcm complex) which is the putative replicative helicase essential for 'once per cell cycle' DNA replication initiation and elongation in eukaryotic cells. The active ATPase sites in the mcm2-7 ring are formed through the interaction surfaces of two neighboring subunits such that a critical structure of a conserved arginine finger motif is provided in trans relative to the ATP-binding site of the Walker A box of the adjacent subunit. The six ATPase active sites, however, are likely to contribute differentially to the complex helicase activity. The existence of maternal and zygotic forms of mcm3 and mcm6 suggests that specific forms of mcm2-7 complexes may be used during different stages of development. The sequence is that of DNA replication licensing factor mcm7 from Xenopus tropicalis (Western clawed frog).